The following is a 140-amino-acid chain: MEVVKDIAESYGAERIYTVGDVVTQNFFKHGLIPTSAAVDEKTRRGVRIEQLAVFKRVIKVNNPPGYITEEAWSAVEEAVRGGVIIKVEGEEDMLSLAFIKLAPPKSIVAYGHYLGALIALPVDWYKEYVLKLFDYLEKC.

The GTP site is built by Asp21, Val22, Val23, Asp40, Lys42, and Glu92.

Belongs to the GTP-dependent DPCK family.

The catalysed reaction is 3'-dephospho-CoA + GTP = GDP + CoA + H(+). Its pathway is cofactor biosynthesis; coenzyme A biosynthesis. Functionally, catalyzes the GTP-dependent phosphorylation of the 3'-hydroxyl group of dephosphocoenzyme A to form coenzyme A (CoA). The sequence is that of GTP-dependent dephospho-CoA kinase from Pyrobaculum aerophilum (strain ATCC 51768 / DSM 7523 / JCM 9630 / CIP 104966 / NBRC 100827 / IM2).